A 153-amino-acid chain; its full sequence is Adenosine 5'-monophosphoramidase HINT3 (153 aa).

The region spanning 20–130 (IFCRIANKQE…PASQLGFLSR (111 aa)) is the HIT domain. AMP is bound by residues 46–47 (DI) and 115–117 (HLH). The Histidine triad motif signature appears at 113–117 (HLHLH). The active-site Tele-AMP-histidine intermediate is His115.

This sequence belongs to the HINT family. Forms dimers to octamers and even larger oligomer.

The protein resides in the cytoplasm. It localises to the nucleus. The catalysed reaction is adenosine 5'-phosphoramidate + H2O = AMP + NH4(+). Exhibits adenosine 5'-monophosphoramidase activity, hydrolyzing purine nucleotide phosphoramidates with a single phosphate group such as adenosine 5'monophosphoramidate (AMP-NH2) to yield AMP and NH2. Hydrolyzes lysyl-AMP (AMP-N-epsilon-(N-alpha-acetyl lysine methyl ester)) generated by lysine tRNA ligase. This Xenopus tropicalis (Western clawed frog) protein is Adenosine 5'-monophosphoramidase HINT3 (hint3).